Here is a 650-residue protein sequence, read N- to C-terminus: Macrolide export ATP-binding/permease protein MacB (650 aa).

In terms of domain architecture, ABC transporter spans 5 to 243 (LELKDIRRSY…AGGTEPVVNT (239 aa)). Residue 41-48 (GASGSGKS) participates in ATP binding. 5 consecutive transmembrane segments (helical) span residues 273–293 (LLTM…VVVG), 523–543 (LFLT…VMNI), 554–574 (ANDI…HLFF), 580–600 (VLPA…AFTL), and 613–633 (PLAL…FGWL).

It belongs to the ABC transporter superfamily. Macrolide exporter (TC 3.A.1.122) family. As to quaternary structure, homodimer. Part of the tripartite efflux system MacAB-TolC, which is composed of an inner membrane transporter, MacB, a periplasmic membrane fusion protein, MacA, and an outer membrane component, TolC. The complex forms a large protein conduit and can translocate molecules across both the inner and outer membranes. Interacts with MacA.

The protein localises to the cell inner membrane. In terms of biological role, part of the tripartite efflux system MacAB-TolC. MacB is a non-canonical ABC transporter that contains transmembrane domains (TMD), which form a pore in the inner membrane, and an ATP-binding domain (NBD), which is responsible for energy generation. Confers resistance against macrolides. The protein is Macrolide export ATP-binding/permease protein MacB of Shigella dysenteriae serotype 1 (strain Sd197).